The chain runs to 359 residues: Putative mannose-1-phosphate guanyltransferase (359 aa).

It belongs to the transferase hexapeptide repeat family.

It catalyses the reaction alpha-D-mannose 1-phosphate + GTP + H(+) = GDP-alpha-D-mannose + diphosphate. This Sulfolobus acidocaldarius (strain ATCC 33909 / DSM 639 / JCM 8929 / NBRC 15157 / NCIMB 11770) protein is Putative mannose-1-phosphate guanyltransferase (mpg1).